Consider the following 370-residue polypeptide: tRNA-specific 2-thiouridylase MnmA (370 aa).

Residues 11–18 and methionine 37 contribute to the ATP site; that span reads GMSGGVDS. Positions 97–99 are interaction with target base in tRNA; it reads NPD. The active-site Nucleophile is cysteine 102. A disulfide bridge links cysteine 102 with cysteine 199. Glycine 126 contributes to the ATP binding site. Residues 149 to 151 form an interaction with tRNA region; it reads KDQ. Residue cysteine 199 is the Cysteine persulfide intermediate of the active site. The interaction with tRNA stretch occupies residues 307–308; the sequence is RY.

This sequence belongs to the MnmA/TRMU family.

Its subcellular location is the cytoplasm. It carries out the reaction S-sulfanyl-L-cysteinyl-[protein] + uridine(34) in tRNA + AH2 + ATP = 2-thiouridine(34) in tRNA + L-cysteinyl-[protein] + A + AMP + diphosphate + H(+). Functionally, catalyzes the 2-thiolation of uridine at the wobble position (U34) of tRNA, leading to the formation of s(2)U34. The sequence is that of tRNA-specific 2-thiouridylase MnmA from Staphylococcus carnosus (strain TM300).